A 1026-amino-acid chain; its full sequence is Multidrug resistance protein MdtC (1026 aa).

11 consecutive transmembrane segments (helical) span residues 15-35 (ILIA…LPVA), 333-353 (EVEE…FLFL), 360-380 (LIPA…MYLC), 387-407 (LSLM…IVVL), 431-451 (VGFT…PLLL), 463-483 (FAVT…TLTP), 528-548 (LVGV…IAIP), 853-873 (LILI…LYES), 897-917 (LFNA…IGIV), 953-973 (PIMM…LSGG), and 984-1004 (ITIV…TPVV).

The protein belongs to the resistance-nodulation-cell division (RND) (TC 2.A.6) family. MdtC subfamily. As to quaternary structure, part of a tripartite efflux system composed of MdtA, MdtB and MdtC. MdtC forms a heteromultimer with MdtB.

It is found in the cell inner membrane. In Salmonella paratyphi A (strain AKU_12601), this protein is Multidrug resistance protein MdtC.